A 2053-amino-acid chain; its full sequence is Integrator complex subunit 1 (2053 aa).

Disordered regions lie at residues 36 to 58 (KILP…ALAS) and 249 to 285 (SLPS…ESEP). A compositionally biased stretch (polar residues) spans 268–283 (DNSTQSLDASPLNTES). The chain crosses the membrane as a helical span at residues 708–728 (LAIIAFYWKAWLILLMISAHN).

The protein belongs to the Integrator subunit 1 family. In terms of assembly, belongs to the multiprotein complex Integrator, at least composed of IntS1, IntS2, IntS3, IntS4, omd/IntS5, IntS6, defl/IntS7, IntS8, IntS9, IntS10, IntS11, IntS12, asun/IntS13, IntS14 and IntS15. The core complex associates with protein phosphatase 2A subunits mts/PP2A and Pp2A-29B, to form the Integrator-PP2A (INTAC) complex. Within the complex, interacts with IntS12 and IntS9. Interaction with IntS12 is likely to be important for promoting 3'-end processing of snRNAs. Interacts with Mediator complex members Cdk8 and CycC.

Its subcellular location is the nucleus membrane. It localises to the nucleus. Component of the integrator complex, a multiprotein complex that terminates RNA polymerase II (Pol II) transcription in the promoter-proximal region of genes. The integrator complex provides a quality checkpoint during transcription elongation by driving premature transcription termination of transcripts that are unfavorably configured for transcriptional elongation: the complex terminates transcription by (1) catalyzing dephosphorylation of the C-terminal domain (CTD) of Pol II subunit Polr2A/Rbp1 and Spt5, and (2) degrading the exiting nascent RNA transcript via endonuclease activity. The integrator complex is also involved in the 3'-end processing of the U7 snRNA, and also the spliceosomal snRNAs U1, U2, U4 and U5. Required for the normal expression of the Integrator complex component IntS12. The chain is Integrator complex subunit 1 from Drosophila melanogaster (Fruit fly).